Reading from the N-terminus, the 185-residue chain is METPGVLLVMGVSGSGKSTVGALLANKLGWKFYDADDYHSEENRIKMGKGVPLNDQDRIPWLCSLHDILLRDVASGQSVVLACSALKKMYRDILNRGGSDVPPRSDESAKEEPLAGGKFLVVHLCGSFELIYGRLLQRRGHFMPPELLQSQFSILEPPSAPENFIHISVDKGLPEIAAAVLEALK.

11–18 lines the ATP pocket; the sequence is GVSGSGKS.

The protein belongs to the gluconokinase GntK/GntV family.

The catalysed reaction is D-gluconate + ATP = 6-phospho-D-gluconate + ADP + H(+). The protein operates within carbohydrate acid metabolism; D-gluconate degradation. The chain is Probable gluconokinase (Idnk) from Rattus norvegicus (Rat).